Consider the following 630-residue polypeptide: MSESATPHGSPGEKLRLAGLIGVLGVVYGDIGTSPLYAVQASLSYFPGNKLQESDVLGLLSLIFWALIITVTIKYVLLIMRADNEGEGGTLSLMALAQRVTQSDRTKWIIGIIGICGAGLFFGDATITPAISVLSAVEGMEVVSPGLKEFVLPIAIAVILVLFFVQRFGTARVGGAFGPIMVIWFVVIGALGLHQIFIHPNVLRALVPVYGAAFIMRHDLLAFIALGSVVLAVTGAEALYADMGHFGAKPIRVSWLFFVLPCLLLNYFGQGALVIRDPHAASNPFFFLLPHALVVPMVILATIATVIASQAVISGAYSVARQSTQLGLLPRMPIRYTNETEQGQIYVPPVNSFLFVVVVLLVLGFGSSSALASAYGIAVTGTFLSTNALAAFVYCRHFNWPLRRTVLVFGAIGLVDFAFFSSNVLKVFDGGWVPLAIGFSLITVMTTWRRGRALLHQRWQQDSLPLASFLGRLPQSRIVRVPGVAVFMTGNPEYTPSSLLHNLKHNKVLHETVVFVTVRNPGVPFVGDARRAKVEELSEGVYRVLLSFGFMESPNIPRALDLLREQGLPFNPMQISYFLGRETIVAATVPKLGFIRRAIFLFMLRNAISATEFFKIPSDRVVELGVRIAI.

12 helical membrane passes run 19–39 (GLIGVLGVVYGDIGTSPLYAV), 59–79 (LLSLIFWALIITVTIKYVLLI), 108–128 (WIIGIIGICGAGLFFGDATIT), 145–165 (PGLKEFVLPIAIAVILVLFFV), 173–193 (VGGAFGPIMVIWFVVIGALGL), 220–240 (LLAFIALGSVVLAVTGAEALY), 255–275 (WLFFVLPCLLLNYFGQGALVI), 284–304 (PFFFLLPHALVVPMVILATIA), 345–365 (IYVPPVNSFLFVVVVLLVLGF), 374–394 (AYGIAVTGTFLSTNALAAFVY), 405–425 (TVLVFGAIGLVDFAFFSSNVL), and 427–447 (VFDGGWVPLAIGFSLITVMTT).

It belongs to the HAK/KUP transporter (TC 2.A.72) family.

It localises to the cell inner membrane. The catalysed reaction is K(+)(in) + H(+)(in) = K(+)(out) + H(+)(out). Its function is as follows. Transport of potassium into the cell. Likely operates as a K(+):H(+) symporter. The sequence is that of Probable potassium transport system protein Kup from Acidiphilium cryptum (strain JF-5).